We begin with the raw amino-acid sequence, 866 residues long: Rifampicin phosphotransferase (866 aa).

The tract at residues 1–313 (MSSLVLGLHE…FYIVQSRPIT (313 aa)) is ATP-binding. Lysine 22, arginine 116, glycine 131, threonine 135, glutamine 182, glutamate 296, glutamine 308, and arginine 310 together coordinate ATP. The tract at residues 326 to 754 (NHVYISVGHQ…TSDGEIVTGE (429 aa)) is rifampicin-binding. The tract at residues 410–429 (IPNDKTAPNPSRGNADMPAQ) is disordered. The tract at residues 767–865 (GLPVSSGVIE…VHGTEGYIEI (99 aa)) is swivel phosphohistidine. Histidine 825 functions as the Tele-phosphohistidine intermediate in the catalytic mechanism.

This sequence belongs to the rifampicin phosphotransferase family.

It carries out the reaction rifampicin + ATP + H2O = 21-phosphorifampicin + AMP + phosphate + 2 H(+). Functionally, catalyzes the phosphorylation of rifampicin, also known as rifampin (RIF), leading to its inactivation. This chain is Rifampicin phosphotransferase, found in Bacillus subtilis (strain 168).